The following is a 163-amino-acid chain: Protein GOLVEN 3 (163 aa).

A signal peptide spans 1-20 (MMRFTIIVIAFLLIIQSLEE). The propeptide occupies 21–141 (EHILVYAHEG…MEKLARLLRD (121 aa)). Tyr143 bears the Sulfotyrosine mark. The tract at residues 144–163 (PIYSKPRRKPPVNNRAPDKF) is disordered. Hydroxyproline is present on Pro154. The propeptide occupies 158 to 163 (RAPDKF).

Belongs to the RGF family. Binds to LRR receptor-like serine/threonine-protein kinases RGI1, RGI2 and RGI3 to trigger their dimerization with SERK proteins and subsequent signaling. As to expression, expressed in roots, specifically in the root apical meristem (RAM).

Its subcellular location is the secreted. Functionally, signaling peptide (root growth factor) required during root gravitropism in a PIN2-traffic dependent manner, thus influencing the formation of auxin gradients. Maintains the postembryonic root stem cell niche. In Arabidopsis thaliana (Mouse-ear cress), this protein is Protein GOLVEN 3.